We begin with the raw amino-acid sequence, 75 residues long: Small ribosomal subunit protein eS17 (75 aa).

It belongs to the eukaryotic ribosomal protein eS17 family.

The polypeptide is Small ribosomal subunit protein eS17 (Thermoplasma acidophilum (strain ATCC 25905 / DSM 1728 / JCM 9062 / NBRC 15155 / AMRC-C165)).